A 445-amino-acid chain; its full sequence is tRNA-2-methylthio-N(6)-dimethylallyladenosine synthase (445 aa).

Residues 3–124 (KKLYIKTYGC…LPELISKVVR (122 aa)) form the MTTase N-terminal domain. Residues Cys12, Cys48, Cys87, Cys162, Cys166, and Cys169 each coordinate [4Fe-4S] cluster. Positions 148–380 (YPQGASSFIS…QQELTAQQLA (233 aa)) constitute a Radical SAM core domain. In terms of domain architecture, TRAM spans 383–445 (ESCVGSIMKV…ASNSLTGEVI (63 aa)).

It belongs to the methylthiotransferase family. MiaB subfamily. As to quaternary structure, monomer. [4Fe-4S] cluster serves as cofactor.

The protein localises to the cytoplasm. It catalyses the reaction N(6)-dimethylallyladenosine(37) in tRNA + (sulfur carrier)-SH + AH2 + 2 S-adenosyl-L-methionine = 2-methylsulfanyl-N(6)-dimethylallyladenosine(37) in tRNA + (sulfur carrier)-H + 5'-deoxyadenosine + L-methionine + A + S-adenosyl-L-homocysteine + 2 H(+). Functionally, catalyzes the methylthiolation of N6-(dimethylallyl)adenosine (i(6)A), leading to the formation of 2-methylthio-N6-(dimethylallyl)adenosine (ms(2)i(6)A) at position 37 in tRNAs that read codons beginning with uridine. This chain is tRNA-2-methylthio-N(6)-dimethylallyladenosine synthase, found in Rickettsia felis (strain ATCC VR-1525 / URRWXCal2) (Rickettsia azadi).